The sequence spans 657 residues: Threonine--tRNA ligase (657 aa).

In terms of domain architecture, TGS spans 7 to 70; the sequence is DRQQVIITLP…TENARVSIIT (64 aa). A catalytic region spans residues 253–555; sequence DHRKLGAELG…LIEHTAGNFP (303 aa). 3 residues coordinate Zn(2+): C351, H402, and H532.

Belongs to the class-II aminoacyl-tRNA synthetase family. As to quaternary structure, homodimer. The cofactor is Zn(2+).

It localises to the cytoplasm. It carries out the reaction tRNA(Thr) + L-threonine + ATP = L-threonyl-tRNA(Thr) + AMP + diphosphate + H(+). Catalyzes the attachment of threonine to tRNA(Thr) in a two-step reaction: L-threonine is first activated by ATP to form Thr-AMP and then transferred to the acceptor end of tRNA(Thr). Also edits incorrectly charged L-seryl-tRNA(Thr). This chain is Threonine--tRNA ligase, found in Chlorobaculum tepidum (strain ATCC 49652 / DSM 12025 / NBRC 103806 / TLS) (Chlorobium tepidum).